A 356-amino-acid polypeptide reads, in one-letter code: DNA polymerase IV (356 aa).

In terms of domain architecture, UmuC spans Ile-7–Gly-187. Mg(2+) contacts are provided by Asp-11 and Asp-105. Residue Glu-106 is part of the active site.

The protein belongs to the DNA polymerase type-Y family. Monomer. Mg(2+) serves as cofactor.

The protein localises to the cytoplasm. It catalyses the reaction DNA(n) + a 2'-deoxyribonucleoside 5'-triphosphate = DNA(n+1) + diphosphate. In terms of biological role, poorly processive, error-prone DNA polymerase involved in untargeted mutagenesis. Copies undamaged DNA at stalled replication forks, which arise in vivo from mismatched or misaligned primer ends. These misaligned primers can be extended by PolIV. Exhibits no 3'-5' exonuclease (proofreading) activity. May be involved in translesional synthesis, in conjunction with the beta clamp from PolIII. The polypeptide is DNA polymerase IV (Stenotrophomonas maltophilia (strain R551-3)).